Here is a 724-residue protein sequence, read N- to C-terminus: MVLTLLLSAYKLCRFFAMSGPRPGAERLAVPGPDGGGGTGPWWAAGGRGPREVSPGAGTEVQDALERALPELQQALSALKQAGGARAVGAGLAEVFQLVEEAWLLPAVGREVAQGLCDAIRLDGGLDLLLRLLQAPELETRVQAARLLEQILVAENRDRVARIGLGVILNLAKEREPVELARSVAGILEHMFKHSEETCQRLVAAGGLDAVLYWCRRTDPALLRHCALALGNCALHGGQAVQRRMVEKRAAEWLFPLAFSKEDELLRLHACLAVAVLATNKEVEREVERSGTLALVEPLVASLDPGRFARCLVDASDTSQGRGPDDLQRLVPLLDSNRLEAQCIGAFYLCAEAAIKSLQGKTKVFSDIGAIQSLKRLVSYSTNGTKSALAKRALRLLGEEVPRPILPSVPSWKEAEVQTWLQQIGFSKYCESFREQQVDGDLLLRLTEEELQTDLGMKSGITRKRFFRELTELKTFANYSTCDRSNLADWLGSLDPRFRQYTYGLVSCGLDRSLLHRVSEQQLLEDCGIHLGVHRARILTAAREMLHSPLPCTGGKPSGDTPDVFISYRRNSGSQLASLLKVHLQLHGFSVFIDVEKLEAGKFEDKLIQSVMGARNFVLVLSPGALDKCMQDHDCKDWVHKEIVTALSCGKNIVPIIDGFEWPEPQVLPEDMQAVLTFNGIKWSHEYQEATIEKIIRFLQGRSSRDSSAGSDTSLEGAAPMGPT.

The transit peptide at 1–27 directs the protein to the mitochondrion; it reads MVLTLLLSAYKLCRFFAMSGPRPGAER. One copy of the ARM 1 repeat lies at 60–100; it reads EVQDALERALPELQQALSALKQAGGARAVGAGLAEVFQLVE. Residues Trp-103, Arg-110, 149 to 157, and 190 to 193 each bind NAD(+); these read EQILVAENR and HMFK. ARM repeat units follow at residues 114-153, 155-193, 196-235, 237-280, 281-314, 315-354, and 359-402; these read QGLC…QILV, ENRD…HMFK, EETC…NCAL, GGQA…LATN, KEVE…CLVD, ASDT…AEAA, and QGKT…EEVP. SAM domains are found at residues 412–476 and 486–548; these read WKEA…LKTF and NLAD…MLHS. 2 positions are modified to phosphoserine: Ser-548 and Ser-558. Positions 560-703 constitute a TIR domain; that stretch reads DTPDVFISYR…KIIRFLQGRS (144 aa). Residues 569-570 and Glu-599 each bind NAD(+); that span reads RR. Glu-642 is an active-site residue. A disordered region spans residues 704 to 724; it reads SRDSSAGSDTSLEGAAPMGPT.

The protein belongs to the SARM1 family. Homooctamer; forms an octameric ring via SAM domains. Interacts with TICAM1/TRIF and thereby interferes with TICAM1/TRIF function. Interacts with MAPK10/JNK3 and SDC2 (via cytoplasmic domain). In terms of processing, phosphorylation at Ser-548 by JNK kinases (MAPK8, MAPK9 and /or MAPK10) enhance the NAD(+) hydrolase (NADase) activity. Phosphorylation at Ser-548 and subsequent activation takes place in response to oxidative stress conditions and inhibits mitochondrial respiration. Predominantly expressed in brain, kidney and liver. Expressed at lower level in placenta.

The protein localises to the cytoplasm. It is found in the cell projection. It localises to the axon. Its subcellular location is the dendrite. The protein resides in the synapse. The protein localises to the mitochondrion. The catalysed reaction is NAD(+) + H2O = ADP-D-ribose + nicotinamide + H(+). It catalyses the reaction NAD(+) = cyclic ADP-beta-D-ribose + nicotinamide + H(+). It carries out the reaction NADP(+) + H2O = ADP-D-ribose 2'-phosphate + nicotinamide + H(+). With respect to regulation, autoinhibited: in the inactive state, the enzymatic TIR domain is held apart by the autoinhibiting ARM repeats. NAD(+)-binding to ARM repeats maintains an inactive state by promoting interaction between ARM repeats and the TIR domain, thereby facilitating inhibition of the enzymatic TIR domain. Following activation, possibly by nicotinamide mononucleotide (NMN), auto-inhibitory interactions are released, allowing self-association of the TIR domains and subsequent activation of the NAD(+) hydrolase (NADase) activity. Self-association of TIR domains is facilitated by the octamer of SAM domains. NAD(+) hydrolase activity is inhibited by nicotinamide. Specifically inhibited by berberine chloride and zinc chloride. NAD(+) hydrolase, which plays a key role in axonal degeneration following injury by regulating NAD(+) metabolism. Acts as a negative regulator of MYD88- and TRIF-dependent toll-like receptor signaling pathway by promoting Wallerian degeneration, an injury-induced form of programmed subcellular death which involves degeneration of an axon distal to the injury site. Wallerian degeneration is triggered by NAD(+) depletion: in response to injury, SARM1 is activated and catalyzes cleavage of NAD(+) into ADP-D-ribose (ADPR), cyclic ADPR (cADPR) and nicotinamide; NAD(+) cleavage promoting cytoskeletal degradation and axon destruction. Also able to hydrolyze NADP(+), but not other NAD(+)-related molecules. Can activate neuronal cell death in response to stress. Regulates dendritic arborization through the MAPK4-JNK pathway. Involved in innate immune response: inhibits both TICAM1/TRIF- and MYD88-dependent activation of JUN/AP-1, TRIF-dependent activation of NF-kappa-B and IRF3, and the phosphorylation of MAPK14/p38. The protein is NAD(+) hydrolase SARM1 of Homo sapiens (Human).